The following is an 833-amino-acid chain: CUB domain-containing protein 1 (833 aa).

Residues 1–29 (MAHSACGFSVALLGALLLGTARLLRGTEA) form the signal peptide. At 30 to 666 (SEIALPQRSG…VTLTPRTVDL (637 aa)) the chain is on the extracellular side. N-linked (GlcNAc...) asparagine glycans are attached at residues Asn-122, Asn-180, Asn-205, Asn-270, Asn-310, Asn-342, and Asn-386. Residues 417 to 540 (CLDHRYCYRQ…QGLIVSYTPY (124 aa)) enclose the CUB domain. Residues Cys-476 and Cys-499 are joined by a disulfide bond. Residues 667–687 (AVVIGAAGGGALLLFALVLII) traverse the membrane as a helical segment. The Cytoplasmic segment spans residues 688-833 (CFVKKKKKVD…HTQGPVETEE (146 aa)). At Tyr-731 the chain carries Phosphotyrosine. The interval 783 to 833 (AKFTAEELAPSSPPESESEPYTFSHPNKGEIGVRETDIPLLHTQGPVETEE) is disordered. Residues 809–819 (NKGEIGVRETD) are compositionally biased toward basic and acidic residues.

In terms of assembly, interacts with CDH2/N-cadherin, CDH3/P-cadherin, SDC1/syndecan-1, SDC4/syndecan-4 and the serine protease ST14/MT-SP1. Also interacts SRC and PRKCG/protein kinase C gamma. In terms of processing, phosphorylated on tyrosine by kinases of the SRC family such as SRC and YES as well as by the protein kinase C gamma/PRKCG. Dephosphorylated by phosphotyrosine phosphatases. Also phosphorylated by suramin, a heparin analog. Tyrosine phosphorylated in response to dissociation of integrin alpha-6 beta-4 from laminin-5. Post-translationally, N-glycosylated. A soluble form may also be produced by proteolytic cleavage at the cell surface (shedding). Another peptide of 80 kDa (p80) is present in cultured keratinocytes probably due to tryptic cleavage at an unidentified site on the N-terminal side. Converted to p80 by plasmin, a trypsin-like protease.

The protein resides in the cell membrane. Its function is as follows. May be involved in cell adhesion and cell matrix association. May play a role in the regulation of anchorage versus migration or proliferation versus differentiation via its phosphorylation. May be a novel marker for leukemia diagnosis and for immature hematopoietic stem cell subsets. Belongs to the tetraspanin web involved in tumor progression and metastasis. The chain is CUB domain-containing protein 1 (Cdcp1) from Mus musculus (Mouse).